A 444-amino-acid chain; its full sequence is CBL-interacting serine/threonine-protein kinase 1 (444 aa).

In terms of domain architecture, Protein kinase spans 20 to 275 (YELGRTLGEG…VVGIKASEWF (256 aa)). ATP-binding positions include 26–34 (LGEGNFGKV) and Lys49. Asp143 functions as the Proton acceptor in the catalytic mechanism. An activation loop region spans residues 161–190 (DFGLSALPQHFRDDGLLHTTCGSPNYVAPE). Residue Ser165 is modified to Phosphoserine. Thr179 carries the phosphothreonine modification. The NAF domain occupies 313–337 (DSPTIINAFQLIGMSSFLDLSGFFE). The tract at residues 343-372 (ERRIRFTSNSSAKDLLEKIETAVTEMGFSV) is PPI.

It belongs to the protein kinase superfamily. CAMK Ser/Thr protein kinase family. SNF1 subfamily. As to quaternary structure, interacts with CBL1. Interacts with CBL2. Interacts with CBL3. Interacts with CBL9. Interacts with ECT1 and ECT2. Mn(2+) serves as cofactor. Autophosphorylated. Ubiquitous.

The enzyme catalyses L-seryl-[protein] + ATP = O-phospho-L-seryl-[protein] + ADP + H(+). It carries out the reaction L-threonyl-[protein] + ATP = O-phospho-L-threonyl-[protein] + ADP + H(+). Functionally, CIPK serine-threonine protein kinases interact with CBL proteins. Binding of a CBL protein to the regulatory NAF domain of CIPK protein lead to the activation of the kinase in a calcium-dependent manner. The polypeptide is CBL-interacting serine/threonine-protein kinase 1 (CIPK1) (Arabidopsis thaliana (Mouse-ear cress)).